A 188-amino-acid polypeptide reads, in one-letter code: FMN-dependent NADPH-azoreductase (188 aa).

The protein belongs to the azoreductase type 2 family. In terms of assembly, homotetramer. It depends on FMN as a cofactor.

Catalyzes the reductive cleavage of azo bond in aromatic azo compounds to the corresponding amines. Requires NADPH, but not NADH, as an electron donor for its activity. This is FMN-dependent NADPH-azoreductase (azo1) from Staphylococcus epidermidis (strain ATCC 12228 / FDA PCI 1200).